Reading from the N-terminus, the 359-residue chain is RuBisCO accumulation factor 1 (359 aa).

The interval 12–195 is N-terminal alpha-helix; it reads LSPEETDALF…RQKIEQLLSD (184 aa). Residues 219 to 345 are C-terminal beta-sheet; the sequence is PLLIPVAGSL…VLLVMRPKKI (127 aa).

Belongs to the RAF family. Homodimer. Forms an RbcL(8)-Raf1(8) complex. Forms complexes of many stoichiometries with RbcL with and without RbcS. RbcX and Raf1 can bind simultaneously to RbcL.

It is found in the cytoplasm. In terms of biological role, a major RuBisCO chaperone. Acts after GroEL-GroES chaperonin to fold and/or assemble the large subunit of RuBisCO (ccbL, rbcL). Cooperates with RbcX in RbcL folding, plays the major role in assembly of dimers into RbcL(8)-Raf1(8) intermediate complexes. RbcS replaces Raf1, leading to holoenzyme formation. Functionally, raf1 and RbcX are probably functionally redundant; it has been suggested they may cooperate. The sequence is that of RuBisCO accumulation factor 1 from Picosynechococcus sp. (strain ATCC 27264 / PCC 7002 / PR-6) (Agmenellum quadruplicatum).